The chain runs to 879 residues: Mediator of RNA polymerase II transcription subunit 14 (879 aa).

This sequence belongs to the Mediator complex subunit 14 family. As to quaternary structure, component of the Mediator complex.

Its subcellular location is the nucleus. Functionally, component of the Mediator complex, a coactivator involved in the regulated transcription of nearly all RNA polymerase II-dependent genes. Mediator functions as a bridge to convey information from gene-specific regulatory proteins to the basal RNA polymerase II transcription machinery. Mediator is recruited to promoters by direct interactions with regulatory proteins and serves as a scaffold for the assembly of a functional preinitiation complex with RNA polymerase II and the general transcription factors. This chain is Mediator of RNA polymerase II transcription subunit 14 (med14), found in Schizosaccharomyces pombe (strain 972 / ATCC 24843) (Fission yeast).